The following is a 240-amino-acid chain: Glutathione S-transferase theta-1 (240 aa).

The GST N-terminal domain maps to 2 to 82; it reads GLELYLDLLS…YLARKYKVPD (81 aa). Glutathione-binding positions include His-40, 53-54, and 66-67; these read KV and ES. Positions 88–226 constitute a GST C-terminal domain; that stretch reads DLQACARVDE…AKDSQPADPT (139 aa).

Belongs to the GST superfamily. Theta family. As to quaternary structure, homodimer.

Its subcellular location is the cytoplasm. The catalysed reaction is RX + glutathione = an S-substituted glutathione + a halide anion + H(+). Functionally, conjugation of reduced glutathione to a wide number of exogenous and endogenous hydrophobic electrophiles. Also binds steroids, bilirubin, carcinogens and numerous organic anions. Has dichloromethane dehalogenase activity. This is Glutathione S-transferase theta-1 (GSTT1) from Bos taurus (Bovine).